The primary structure comprises 683 residues: Inositol-trisphosphate 3-kinase C (683 aa).

The segment at 1 to 124 is disordered; that stretch reads MRRCPCRGSL…PDRSSLRTHL (124 aa). Residues 13 to 22 are compositionally biased toward low complexity; the sequence is AEAGALPAAA. Over residues 44–58 the composition is skewed to gly residues; the sequence is PGAGAPAGRPEGGGP. Residues 105–124 are compositionally biased toward basic and acidic residues; sequence ETERPKQKTEPDRSSLRTHL. Phosphoserine is present on residues Ser-127 and Ser-162. Positions 147–308 are disordered; the sequence is TDPHRSDLQF…EDGPLEEPEP (162 aa). Positions 196 to 206 are enriched in polar residues; the sequence is WTHQNSSSLQT. Over residues 249-259 the composition is skewed to basic and acidic residues; sequence SQKKQDTEAAR. The segment covering 267 to 289 has biased composition (polar residues); the sequence is FQIQQDTDGSWTQPSTDGSQTAP. A compositionally biased stretch (acidic residues) spans 297-308; that stretch reads EPEDGPLEEPEP. The Nuclear export signal signature appears at 324 to 332; that stretch reads LCPVPRLII. A disordered region spans residues 334 to 387; it reads PETPEPEAQPVGPPSRVEGGSGGFSSASSFDESEDDVVAGGGGASDPEDRSGSK. A Phosphothreonine modification is found at Thr-336. Ser-404 is subject to Phosphoserine. ATP contacts are provided by residues Lys-431, 471–473, and Asp-484; that span reads EDL. Residues Lys-486, 507-513, and 534-541 contribute to the substrate site; these read RKDMYEK and KPRYMQWR. Residues 509 to 517 are calmodulin-binding; it reads DMYEKMVAV. Residues Lys-558 and Asp-638 each contribute to the ATP site. Lys-641 is a substrate binding site.

This sequence belongs to the inositol phosphokinase (IPK) family. As to expression, highly expressed in pancreas, skeletal muscle, liver, placenta and weakly in kidney and brain.

The protein localises to the nucleus. It localises to the cytoplasm. It catalyses the reaction 1D-myo-inositol 1,4,5-trisphosphate + ATP = 1D-myo-inositol 1,3,4,5-tetrakisphosphate + ADP + H(+). With respect to regulation, activated by calcium/calmodulin. Inhibited by high concentrations of the substrate Ins(1,2,4)P3, and allosterically activated by the product Ins(1,3,4,5)P4. Catalyzes the phosphorylation of 1D-myo-inositol 1,4,5-trisphosphate (InsP3) into 1D-myo-inositol 1,3,4,5-tetrakisphosphate and participates to the regulation of calcium homeostasis. Can phosphorylate inositol 2,4,5-triphosphate to inositol 2,4,5,6-tetraphosphate. The sequence is that of Inositol-trisphosphate 3-kinase C from Homo sapiens (Human).